The chain runs to 271 residues: Formamidopyrimidine-DNA glycosylase (271 aa).

The active-site Schiff-base intermediate with DNA is the proline 2. The Proton donor role is filled by glutamate 3. The active-site Proton donor; for beta-elimination activity is the lysine 58. DNA-binding residues include histidine 91, arginine 110, and arginine 152. The FPG-type zinc-finger motif lies at 237-271 (SVYGRNDAPCPGCGAPIRRSRQGGRSTYFCDRCQH). The active-site Proton donor; for delta-elimination activity is the arginine 261.

It belongs to the FPG family. In terms of assembly, monomer. Zn(2+) is required as a cofactor.

It carries out the reaction Hydrolysis of DNA containing ring-opened 7-methylguanine residues, releasing 2,6-diamino-4-hydroxy-5-(N-methyl)formamidopyrimidine.. The catalysed reaction is 2'-deoxyribonucleotide-(2'-deoxyribose 5'-phosphate)-2'-deoxyribonucleotide-DNA = a 3'-end 2'-deoxyribonucleotide-(2,3-dehydro-2,3-deoxyribose 5'-phosphate)-DNA + a 5'-end 5'-phospho-2'-deoxyribonucleoside-DNA + H(+). Involved in base excision repair of DNA damaged by oxidation or by mutagenic agents. Acts as a DNA glycosylase that recognizes and removes damaged bases. Has a preference for oxidized purines, such as 7,8-dihydro-8-oxoguanine (8-oxoG). Has AP (apurinic/apyrimidinic) lyase activity and introduces nicks in the DNA strand. Cleaves the DNA backbone by beta-delta elimination to generate a single-strand break at the site of the removed base with both 3'- and 5'-phosphates. The polypeptide is Formamidopyrimidine-DNA glycosylase (Geotalea uraniireducens (strain Rf4) (Geobacter uraniireducens)).